A 1602-amino-acid chain; its full sequence is Mediator of RNA polymerase II transcription subunit 26 (1602 aa).

In terms of domain architecture, TFIIS N-terminal spans 8-85 (QLTSHLSQAL…KMWREMVGIQ (78 aa)). Disordered regions lie at residues 86–108 (QTAN…PSAH), 238–298 (VTDS…AQNE), 399–481 (EDSI…KGVD), 580–617 (FSNK…SLDS), and 694–736 (SDNG…MDTP). Basic residues predominate over residues 273 to 285 (RPKKFKKDKKHKE). Polar residues predominate over residues 401-414 (SITNDSSTSCSRLS). Basic and acidic residues predominate over residues 418–431 (VEERRKSDKIDDSI). A compositionally biased stretch (basic residues) spans 467 to 477 (VPKKRGRKKGS). Positions 587–604 (AGNTDSDTITSEPSQDSN) are enriched in polar residues. Positions 715–728 (KQEEQLPKLERLSD) are enriched in basic and acidic residues. Positions 792 to 820 (LDVASVNADTVQNQINSHNQEGETSEEQN) form a coiled coil. Disordered stretches follow at residues 1035–1158 (FEET…EVEN) and 1372–1407 (NTSA…NESD). Residues 1056 to 1070 (SSSSNSSCSNSSNSS) show a composition bias toward low complexity. Over residues 1073–1083 (KTQDSINEKLR) the composition is skewed to basic and acidic residues. Residues 1101 to 1112 (RKRRGKNRKKRN) show a composition bias toward basic residues. The span at 1124 to 1143 (ISLNGTISNLSSSNNSSSSE) shows a compositional bias: low complexity. Over residues 1144–1158 (SETETGLENENEVEN) the composition is skewed to acidic residues. Basic and acidic residues predominate over residues 1378 to 1388 (TVSEDPLKIEE).

This sequence belongs to the Mediator complex subunit 26 family. In terms of assembly, component of the Mediator complex.

Its subcellular location is the nucleus. Component of the Mediator complex, a coactivator involved in the regulated transcription of nearly all RNA polymerase II-dependent genes. Mediator functions as a bridge to convey information from gene-specific regulatory proteins to the basal RNA polymerase II transcription machinery. Mediator is recruited to promoters by direct interactions with regulatory proteins and serves as a scaffold for the assembly of a functional preinitiation complex with RNA polymerase II and the general transcription factors. This Drosophila pseudoobscura pseudoobscura (Fruit fly) protein is Mediator of RNA polymerase II transcription subunit 26 (MED26).